A 612-amino-acid polypeptide reads, in one-letter code: UvrABC system protein C (612 aa).

The GIY-YIG domain occupies 13-92 (AKPGVYIMHD…IKEHRPKYNT (80 aa)). The region spanning 204 to 239 (KKIMDRLTTQMQEASEKMEYEEAARYRDLLMSVKQV) is the UVR domain.

It belongs to the UvrC family. As to quaternary structure, interacts with UvrB in an incision complex.

It localises to the cytoplasm. Its function is as follows. The UvrABC repair system catalyzes the recognition and processing of DNA lesions. UvrC both incises the 5' and 3' sides of the lesion. The N-terminal half is responsible for the 3' incision and the C-terminal half is responsible for the 5' incision. The protein is UvrABC system protein C of Lachnospira eligens (strain ATCC 27750 / DSM 3376 / VPI C15-48 / C15-B4) (Eubacterium eligens).